The sequence spans 498 residues: Tyrosine 3-monooxygenase (498 aa).

Polar residues predominate over residues 1 to 10 (MPTPSASSPQ). The tract at residues 1-33 (MPTPSASSPQPKGFRRAVSEQDTKQAEAVTSPR) is disordered. Phosphoserine is present on residues serine 19 and serine 31. Serine 40 is subject to Phosphoserine; by CaMK2 and PKA. Fe cation contacts are provided by histidine 331, histidine 336, and glutamate 376. A Phosphoserine modification is found at serine 472.

The protein belongs to the biopterin-dependent aromatic amino acid hydroxylase family. In terms of assembly, homotetramer. Interacts (when phosphorylated at Ser-19) with YWHAG; one YWHAG dimer bounds to one TH tetramer and this interaction may influence the phosphorylation and dephosphorylation of other sites. Interacts with NT5DC2; the interaction results in reduced phosphorylation and decreased catalytic activity of TH. The cofactor is Fe(2+). Post-translationally, phosphorylated on Ser-19, Ser-31 and Ser-40 by several protein kinases with different site specificities. Phosphorylation at Ser-31 and Ser-40 leads to an increase of TH activity. Phosphorylation at Ser-40 activates the enzyme and also counteracts the feedback inhibition of TH by catecholamines. Phosphorylation of Ser-19 and Ser-31 triggers the proteasomal degradation of TH through the ubiquitin-proteasome pathway. Phosphorylation at Ser-31 facilitates transport of TH from the soma to the nerve terminals via the microtubule network. Phosphorylation at Ser-19 induces the high-affinity binding to the 14-3-3 protein YWHAG; this interaction may influence the phosphorylation and dephosphorylation of other sites. Ser-19 increases the phosphorylation at Ser-40 in a hierarchical manner, leading to increased activity. As to expression, expressed in the adrenal gland. Expressed in the retina. Expressed in the in the striatum (at protein level).

The protein resides in the cytoplasm. The protein localises to the perinuclear region. It is found in the nucleus. It localises to the cell projection. Its subcellular location is the axon. The protein resides in the cytoplasmic vesicle. The protein localises to the secretory vesicle. It is found in the synaptic vesicle. It catalyses the reaction (6R)-L-erythro-5,6,7,8-tetrahydrobiopterin + L-tyrosine + O2 = (4aS,6R)-4a-hydroxy-L-erythro-5,6,7,8-tetrahydrobiopterin + L-dopa. The protein operates within catecholamine biosynthesis; dopamine biosynthesis; dopamine from L-tyrosine: step 1/2. Its activity is regulated as follows. Inhibited in feedback fashion by the catecholamine neurotransmitters, especially by dopamine in competition with tetrahydrobiopterin. Phosphorylation of several Ser/Thr residues in the N-terminus regulates the catalytic activity. Ser-31 and Ser-40 are readily phosphorylated to activate the catalytic activity. A Cysteine modification induced by N-ethylmaleimide (NEM), inhibits tyrosine 3-monooxygenase activity through the modification of the Cys-177. Functionally, catalyzes the conversion of L-tyrosine to L-dihydroxyphenylalanine (L-Dopa), the rate-limiting step in the biosynthesis of catecholamines, dopamine, noradrenaline, and adrenaline. Uses tetrahydrobiopterin and molecular oxygen to convert tyrosine to L-Dopa. In addition to tyrosine, is able to catalyze the hydroxylation of phenylalanine and tryptophan with lower specificity. Positively regulates the regression of retinal hyaloid vessels during postnatal development. This Mus musculus (Mouse) protein is Tyrosine 3-monooxygenase (Th).